Consider the following 205-residue polypeptide: Small ribosomal subunit protein uS4 (205 aa).

The tract at residues 27–46 (LNKRDYAPGQHGQRRKGKPS) is disordered. In terms of domain architecture, S4 RNA-binding spans 118–178 (HGHVLVNGKR…HVDHRLMKGT (61 aa)).

It belongs to the universal ribosomal protein uS4 family. As to quaternary structure, part of the 30S ribosomal subunit. Contacts protein S5. The interaction surface between S4 and S5 is involved in control of translational fidelity.

Functionally, one of the primary rRNA binding proteins, it binds directly to 16S rRNA where it nucleates assembly of the body of the 30S subunit. In terms of biological role, with S5 and S12 plays an important role in translational accuracy. The polypeptide is Small ribosomal subunit protein uS4 (Granulibacter bethesdensis (strain ATCC BAA-1260 / CGDNIH1)).